The following is a 556-amino-acid chain: Formate--tetrahydrofolate ligase (556 aa).

Position 65-72 (65-72 (TPAGEGKT)) interacts with ATP.

The protein belongs to the formate--tetrahydrofolate ligase family.

The enzyme catalyses (6S)-5,6,7,8-tetrahydrofolate + formate + ATP = (6R)-10-formyltetrahydrofolate + ADP + phosphate. The protein operates within one-carbon metabolism; tetrahydrofolate interconversion. This Proteus mirabilis (strain HI4320) protein is Formate--tetrahydrofolate ligase.